A 142-amino-acid chain; its full sequence is Putative pre-16S rRNA nuclease (142 aa).

The protein belongs to the YqgF nuclease family.

Its subcellular location is the cytoplasm. Its function is as follows. Could be a nuclease involved in processing of the 5'-end of pre-16S rRNA. The sequence is that of Putative pre-16S rRNA nuclease from Lactobacillus delbrueckii subsp. bulgaricus (strain ATCC 11842 / DSM 20081 / BCRC 10696 / JCM 1002 / NBRC 13953 / NCIMB 11778 / NCTC 12712 / WDCM 00102 / Lb 14).